A 151-amino-acid polypeptide reads, in one-letter code: Ubiquitin-conjugating enzyme E2-17 kDa (151 aa).

One can recognise a UBC core domain in the interval 4–150 (PARRRLMRDF…VKACVEQSFI (147 aa)). Cys-88 acts as the Glycyl thioester intermediate in catalysis.

It belongs to the ubiquitin-conjugating enzyme family.

It is found in the nucleus. The catalysed reaction is S-ubiquitinyl-[E1 ubiquitin-activating enzyme]-L-cysteine + [E2 ubiquitin-conjugating enzyme]-L-cysteine = [E1 ubiquitin-activating enzyme]-L-cysteine + S-ubiquitinyl-[E2 ubiquitin-conjugating enzyme]-L-cysteine.. It functions in the pathway protein modification; protein ubiquitination. In terms of biological role, E2 ubiquitin-conjugating enzyme that accepts ubiquitin from the ubiquitin-activating enzyme E1 and transfers it to a E3 ubiquitin-protein ligase. Required for postreplication repair of UV-damaged DNA. Involved in the negative regulation of the Ras/MAPK signaling pathway in the wing by acting with the putative E3 ligases poe, Kcmf1 and Ufd4 to mediate the ubiquitination and proteasomal degradation of rl/MAPK. Required for in mitophagy. In Drosophila melanogaster (Fruit fly), this protein is Ubiquitin-conjugating enzyme E2-17 kDa.